A 123-amino-acid chain; its full sequence is Potassium voltage-gated channel subfamily E member 2 (123 aa).

N-linked (GlcNAc...) asparagine glycosylation is found at asparagine 6 and asparagine 29. Residues 49–69 form a helical membrane-spanning segment; the sequence is VILYLMVMIGMFSFIIVAILV. The Cytoplasmic portion of the chain corresponds to 70 to 123; sequence STVKSKRREHSNDPYHQYIVEDWQEKYKSQILNLEESKATIHENIGAAGFKMSP.

This sequence belongs to the potassium channel KCNE family. As to quaternary structure, interacts with KCNB1. Associates with KCNH2/ERG1. May associate with KCNQ2 and KCNQ3. Associates with HCN1 and probably HCN2. Heteromultimer with KCNC2. Interacts with KCNC2. Interacts with KCNQ1; forms a heterooligomer complex that targets to the membrane raft and leading to currents with an apparently instantaneous activation, a rapid deactivation process and a linear current-voltage relationship and decreases the amplitude of the outward current. As to expression, highly expressed in brain, heart, skeletal muscle, pancreas, placenta, kidney, colon and thymus. A small but significant expression is found in liver, ovary, testis, prostate, small intestine and leukocytes. Very low expression, nearly undetectable, in lung and spleen.

The protein localises to the cell membrane. Its subcellular location is the apical cell membrane. Its function is as follows. Ancillary protein that functions as a regulatory subunit of the voltage-gated potassium (Kv) channel complex composed of pore-forming and potassium-conducting alpha subunits and of regulatory beta subunits. KCNE2 beta subunit modulates the gating kinetics and enhances stability of the channel complex. Alters the gating of the delayed rectifier Kv channel containing KCNB1 alpha subunit. Associates with KCNH2/HERG alpha subunit Kv channel to form the rapidly activating component of the delayed rectifying potassium current (IKr) in heart. May associate with KCNQ2 and/or KCNQ3 alpha subunits to modulate the native M-type current. May associate with HCN1 and HCN2 channel subunits to increase potassium current. Forms a heterooligomer complex with KCNQ1/KVLQT1 alpha subunits which leads to currents with an apparently instantaneous activation, a rapid deactivation process and a linear current-voltage relationship and decreases the amplitude of the outward current. KCNQ1-KCNE2 channel associates with Na(+)-coupled myo-inositol symporter in the apical membrane of choroid plexus epithelium and regulates the myo-inositol gradient between blood and cerebrospinal fluid with an impact on neuron excitability. The protein is Potassium voltage-gated channel subfamily E member 2 of Homo sapiens (Human).